Consider the following 552-residue polypeptide: 4-coumarate--CoA ligase-like 3 (552 aa).

ATP is bound by residues Ser207, Ser208, Gly209, Thr210, Thr211, and Lys215. Position 252 (Phe252) interacts with (E)-4-coumaroyl-AMP. Arg273 provides a ligand contact to CoA. The interval 275 to 346 (GLDDMMQAVE…EKYPTVNIFQ (72 aa)) is SBD1. 4 residues coordinate (E)-4-coumaroyl-AMP: Gly324, Gln346, Gly347, and Thr351. ATP is bound by residues Gln346, Gly347, Thr351, Asp432, and Arg447. An SBD2 region spans residues 347–411 (GYALTESHGS…LKGPSISKGY (65 aa)). (E)-4-coumaroyl-AMP is bound by residues Lys449 and Lys453. 2 residues coordinate CoA: Lys455 and Gly456. Lys538 serves as a coordination point for ATP. Residues 550–552 (SKL) carry the Microbody targeting signal motif.

This sequence belongs to the ATP-dependent AMP-binding enzyme family. Mg(2+) serves as cofactor.

It localises to the peroxisome. The catalysed reaction is (E)-4-coumarate + ATP + CoA = (E)-4-coumaroyl-CoA + AMP + diphosphate. It catalyses the reaction (E)-4-coumarate + ATP + H(+) = (E)-4-coumaroyl-AMP + diphosphate. The enzyme catalyses (E)-4-coumaroyl-AMP + CoA = (E)-4-coumaroyl-CoA + AMP + H(+). Carboxylate--CoA ligase that may use 4-coumarate as substrate. Follows a two-step reaction mechanism, wherein the carboxylate substrate first undergoes adenylation by ATP, followed by a thioesterification in the presence of CoA to yield the final CoA thioester. This is 4-coumarate--CoA ligase-like 3 from Arabidopsis thaliana (Mouse-ear cress).